The chain runs to 1021 residues: 2-oxoglutarate dehydrogenase complex component E1 (1021 aa).

A mitochondrion-targeting transit peptide spans 1 to 40; the sequence is MFNLRTCASKLRPLTASQTIRSLKHNRPAAPRTFQQFRCL. Ca(2+)-binding residues include H142, D155, and D157. Thiamine diphosphate contacts are provided by R311, D410, N443, and I445. D410, N443, and I445 together coordinate Mg(2+). K533 participates in a covalent cross-link: Glycyl lysine isopeptide (Lys-Gly) (interchain with G-Cter in ubiquitin). Thiamine diphosphate is bound at residue Q675.

Belongs to the alpha-ketoglutarate dehydrogenase family. Homodimer. The 2-oxoglutarate dehydrogenase complex is composed of OGDH (2-oxoglutarate dehydrogenase; E1), DLST (dihydrolipoamide succinyltransferase; E2) and DLD (dihydrolipoamide dehydrogenase; E3). It contains multiple copies of the three enzymatic components (E1, E2 and E3). In the nucleus, the 2-oxoglutarate dehydrogenase complex associates with kat2a. The cofactor is thiamine diphosphate. It depends on Mg(2+) as a cofactor. As to expression, expressed in the brain.

The protein localises to the mitochondrion. The protein resides in the nucleus. The catalysed reaction is N(6)-[(R)-lipoyl]-L-lysyl-[protein] + 2-oxoglutarate + H(+) = N(6)-[(R)-S(8)-succinyldihydrolipoyl]-L-lysyl-[protein] + CO2. Calcium ions and ADP stimulate, whereas ATP and NADH reduce catalytic activity. Functionally, 2-oxoglutarate dehydrogenase (E1o) component of the 2-oxoglutarate dehydrogenase complex (OGDHC). Participates in the first step, rate limiting for the overall conversion of 2-oxoglutarate to succinyl-CoA and CO(2) catalyzed by the whole OGDHC. Catalyzes the irreversible decarboxylation of 2-oxoglutarate (alpha-ketoglutarate) via the thiamine diphosphate (ThDP) cofactor and subsequent transfer of the decarboxylated acyl intermediate on an oxidized dihydrolipoyl group that is covalently amidated to the E2 enzyme (dihydrolipoyllysine-residue succinyltransferase or DLST). Plays a key role in the Krebs (citric acid) cycle, which is a common pathway for oxidation of fuel molecules, including carbohydrates, fatty acids, and amino acids. Can catalyze the decarboxylation of 2-oxoadipate in vitro, but at a much lower rate than 2-oxoglutarate. Mainly active in the mitochondrion. A fraction of the 2-oxoglutarate dehydrogenase complex also localizes in the nucleus and is required for lysine succinylation of histones: associates with KAT2A on chromatin and provides succinyl-CoA to histone succinyltransferase KAT2A. The protein is 2-oxoglutarate dehydrogenase complex component E1 (ogdh) of Xenopus laevis (African clawed frog).